The primary structure comprises 170 residues: Protein SOB FIVE-LIKE 5 (170 aa).

An SOFL-A motif is present at residues 10-15 (SGWTLY). The interval 17–78 (DQSVSSPSPS…GPRNISEEDS (62 aa)) is disordered. Residues 35–44 (DSRRRSKDSW) show a composition bias toward basic and acidic residues. An SOFL-B motif is present at residues 61–70 (SMISDASSGP). Positions 79-86 (VKKINIVG) match the Nuclear localization signal motif.

This sequence belongs to the SOFL plant protein family. In terms of tissue distribution, expressed in seedlings, roots, flowers and siliques. Barely detectable in leaves.

The protein resides in the cytoplasm. The protein localises to the nucleus. Functionally, involved in cytokinin-mediated development. In Arabidopsis thaliana (Mouse-ear cress), this protein is Protein SOB FIVE-LIKE 5.